The chain runs to 655 residues: p-hydroxybenzoic acid efflux pump subunit AaeB (655 aa).

The next 10 membrane-spanning stretches (helical) occupy residues 13–33 (FAVKLASAIVLTLFVGFHFQL), 38–58 (WAVLTAAIVAAGPAFAAGGEP), 69–89 (LRIIGTFIGCIAGLVIIIAMI), 93–113 (LLMILVCCIWAGFCTWISSLV), 121–141 (WGLAGYTALIIVITIQPEPLL), 152–172 (EIVVGIVCAIVADLIFSPRSI), 370–390 (LFWLWTGWTSGSGAMVMIAVV), 407–427 (FIYGTLAALPLGLLYFLVIIP), 431–451 (QSMLLLCLSLAVLGFFLGIEV), and 481–501 (LFLDSALGQIVGCVLAFTVIL).

It belongs to the aromatic acid exporter ArAE (TC 2.A.85) family.

Its subcellular location is the cell inner membrane. In terms of biological role, forms an efflux pump with AaeA. Could function as a metabolic relief valve, allowing to eliminate certain compounds when they accumulate to high levels in the cell. This chain is p-hydroxybenzoic acid efflux pump subunit AaeB, found in Escherichia fergusonii (strain ATCC 35469 / DSM 13698 / CCUG 18766 / IAM 14443 / JCM 21226 / LMG 7866 / NBRC 102419 / NCTC 12128 / CDC 0568-73).